The sequence spans 239 residues: Pyridoxine 5'-phosphate synthase (239 aa).

N7 is a 3-amino-2-oxopropyl phosphate binding site. Residue 9–10 (DH) participates in 1-deoxy-D-xylulose 5-phosphate binding. R18 serves as a coordination point for 3-amino-2-oxopropyl phosphate. The Proton acceptor role is filled by H43. 1-deoxy-D-xylulose 5-phosphate is bound by residues R45 and H50. The Proton acceptor role is filled by E70. Residue T100 coordinates 1-deoxy-D-xylulose 5-phosphate. H191 serves as the catalytic Proton donor. Residues G192 and 213–214 (GH) contribute to the 3-amino-2-oxopropyl phosphate site.

Belongs to the PNP synthase family. As to quaternary structure, homooctamer; tetramer of dimers.

The protein resides in the cytoplasm. It catalyses the reaction 3-amino-2-oxopropyl phosphate + 1-deoxy-D-xylulose 5-phosphate = pyridoxine 5'-phosphate + phosphate + 2 H2O + H(+). Its pathway is cofactor biosynthesis; pyridoxine 5'-phosphate biosynthesis; pyridoxine 5'-phosphate from D-erythrose 4-phosphate: step 5/5. Catalyzes the complicated ring closure reaction between the two acyclic compounds 1-deoxy-D-xylulose-5-phosphate (DXP) and 3-amino-2-oxopropyl phosphate (1-amino-acetone-3-phosphate or AAP) to form pyridoxine 5'-phosphate (PNP) and inorganic phosphate. The sequence is that of Pyridoxine 5'-phosphate synthase from Nostoc sp. (strain PCC 7120 / SAG 25.82 / UTEX 2576).